The sequence spans 511 residues: Sterol 14-alpha demethylase resB (511 aa).

A helical membrane pass occupies residues 3 to 23; that stretch reads ILWIVAYALLAFAASIALNLV. C451 provides a ligand contact to heme.

It belongs to the cytochrome P450 family. Heme serves as cofactor.

It localises to the membrane. The enzyme catalyses a 14alpha-methyl steroid + 3 reduced [NADPH--hemoprotein reductase] + 3 O2 = a Delta(14) steroid + formate + 3 oxidized [NADPH--hemoprotein reductase] + 4 H2O + 4 H(+). The catalysed reaction is a 14alpha-methyl steroid + reduced [NADPH--hemoprotein reductase] + O2 = a 14alpha-hydroxymethyl steroid + oxidized [NADPH--hemoprotein reductase] + H2O + H(+). It catalyses the reaction a 14alpha-hydroxymethyl steroid + reduced [NADPH--hemoprotein reductase] + O2 = a 14alpha-formyl steroid + oxidized [NADPH--hemoprotein reductase] + 2 H2O + H(+). It carries out the reaction a 14alpha-formyl steroid + reduced [NADPH--hemoprotein reductase] + O2 = a Delta(14) steroid + formate + oxidized [NADPH--hemoprotein reductase] + H2O + 2 H(+). The enzyme catalyses lanosterol + 3 reduced [NADPH--hemoprotein reductase] + 3 O2 = 4,4-dimethyl-5alpha-cholesta-8,14,24-trien-3beta-ol + formate + 3 oxidized [NADPH--hemoprotein reductase] + 4 H2O + 4 H(+). The catalysed reaction is lanosterol + reduced [NADPH--hemoprotein reductase] + O2 = 32-hydroxylanosterol + oxidized [NADPH--hemoprotein reductase] + H2O + H(+). It catalyses the reaction 32-hydroxylanosterol + reduced [NADPH--hemoprotein reductase] + O2 = 32-oxolanosterol + oxidized [NADPH--hemoprotein reductase] + 2 H2O + H(+). It carries out the reaction 32-oxolanosterol + reduced [NADPH--hemoprotein reductase] + O2 = 4,4-dimethyl-5alpha-cholesta-8,14,24-trien-3beta-ol + formate + oxidized [NADPH--hemoprotein reductase] + H2O + 2 H(+). The enzyme catalyses eburicol + 3 reduced [NADPH--hemoprotein reductase] + 3 O2 = 14-demethyleburicol + formate + 3 oxidized [NADPH--hemoprotein reductase] + 4 H2O + 4 H(+). The catalysed reaction is eburicol + reduced [NADPH--hemoprotein reductase] + O2 = 32-hydroxyeburicol + oxidized [NADPH--hemoprotein reductase] + H2O + H(+). It catalyses the reaction 32-hydroxyeburicol + reduced [NADPH--hemoprotein reductase] + O2 = 32-oxoeburicol + oxidized [NADPH--hemoprotein reductase] + 2 H2O + H(+). It carries out the reaction 32-oxoeburicol + reduced [NADPH--hemoprotein reductase] + O2 = 14-demethyleburicol + formate + oxidized [NADPH--hemoprotein reductase] + H2O + 2 H(+). In terms of biological role, sterol 14-alpha demethylase; part of the gene cluster that mediates the biosynthesis of the tetrahydropyranyl antifungal agent restricticin that acts as an inhibitor of CYP51 and blocks the ergosterol biosynthesis. Sterol 14-alpha-demethylase plays a critical role in the biosynthesis of ergosterol, the major sterol component in fungal membranes that participates in a variety of functions. ResB acts as a self-resistant CYP51 that contains mutations found in CYP51s isolated from azole resistance strains and that is not inhibited by the final product of the cluster, restricticin. The polypeptide is Sterol 14-alpha demethylase resB (Aspergillus sclerotiorum).